We begin with the raw amino-acid sequence, 471 residues long: Putative multidrug resistance protein MdtD (471 aa).

The Periplasmic portion of the chain corresponds to methionine 1–glutamine 11. A helical transmembrane segment spans residues leucine 12 to alanine 32. The Cytoplasmic segment spans residues leucine 33 to histidine 48. A helical transmembrane segment spans residues methionine 49 to alanine 69. Residues aspartate 70 to asparagine 76 lie on the Periplasmic side of the membrane. The chain crosses the membrane as a helical span at residues isoleucine 77 to threonine 97. The Cytoplasmic portion of the chain corresponds to leucine 98–leucine 101. A helical membrane pass occupies residues leucine 102–methionine 124. Residues lysine 125–threonine 137 are Periplasmic-facing. The chain crosses the membrane as a helical span at residues phenylalanine 138–valine 158. Topologically, residues glutamate 159–histidine 164 are cytoplasmic. Residues tryptophan 165 to methionine 185 form a helical membrane-spanning segment. Over proline 186–aspartate 196 the chain is Periplasmic. Residues leucine 197 to serine 217 traverse the membrane as a helical segment. Topologically, residues lysine 218–proline 224 are cytoplasmic. The helical transmembrane segment at leucine 225 to alanine 245 threads the bilayer. Residues glutamine 246 to asparagine 262 are Periplasmic-facing. The helical transmembrane segment at phenylalanine 263 to methionine 283 threads the bilayer. The Cytoplasmic segment spans residues threonine 284–proline 285. Residues valine 286 to methionine 306 form a helical membrane-spanning segment. Residues valine 307–threonine 341 are Periplasmic-facing. Residues leucine 342 to leucine 362 form a helical membrane-spanning segment. The Cytoplasmic portion of the chain corresponds to glutamine 363–serine 395. Residues methionine 396 to phenylalanine 416 traverse the membrane as a helical segment. Residues glycine 417–threonine 430 are Periplasmic-facing. The helical transmembrane segment at valine 431–alanine 451 threads the bilayer. Topologically, residues arginine 452–glutamine 471 are cytoplasmic.

It belongs to the major facilitator superfamily. TCR/Tet family.

Its subcellular location is the cell inner membrane. This Escherichia coli O1:K1 / APEC protein is Putative multidrug resistance protein MdtD.